The sequence spans 177 residues: Large ribosomal subunit protein uL6 (177 aa).

This sequence belongs to the universal ribosomal protein uL6 family. Part of the 50S ribosomal subunit.

Functionally, this protein binds to the 23S rRNA, and is important in its secondary structure. It is located near the subunit interface in the base of the L7/L12 stalk, and near the tRNA binding site of the peptidyltransferase center. This chain is Large ribosomal subunit protein uL6, found in Azoarcus sp. (strain BH72).